Reading from the N-terminus, the 420-residue chain is uncharacterized protein (420 aa).

Residues 79 to 420 (GKGIDNEAAM…AVNTIRGAES (342 aa)) enclose the YcaO domain.

This is an uncharacterized protein from Rhizobium leguminosarum bv. trifolii.